The primary structure comprises 230 residues: Ribonuclease HII (230 aa).

Positions 28–217 (FRIAGIDEAG…VKEHLPSQPD (190 aa)) constitute an RNase H type-2 domain. The a divalent metal cation site is built by aspartate 34, glutamate 35, and aspartate 126. The disordered stretch occupies residues 209–230 (KEHLPSQPDSDTAGPSTGLFSF). A compositionally biased stretch (polar residues) spans 215–230 (QPDSDTAGPSTGLFSF).

It belongs to the RNase HII family. The cofactor is Mn(2+). Mg(2+) is required as a cofactor.

Its subcellular location is the cytoplasm. It carries out the reaction Endonucleolytic cleavage to 5'-phosphomonoester.. Functionally, endonuclease that specifically degrades the RNA of RNA-DNA hybrids. This is Ribonuclease HII from Citrifermentans bemidjiense (strain ATCC BAA-1014 / DSM 16622 / JCM 12645 / Bem) (Geobacter bemidjiensis).